The chain runs to 126 residues: Fatty acid-binding protein, liver (126 aa).

Alanine 2 is modified (N-acetylalanine). Cholate is bound by residues arginine 56, glutamine 57, lysine 77, histidine 99, and glutamine 101.

Belongs to the calycin superfamily. Fatty-acid binding protein (FABP) family.

Its subcellular location is the cytoplasm. Its function is as follows. Binds free fatty acids and their coenzyme A derivatives, bilirubin, and some other small molecules in the cytoplasm. May be involved in intracellular lipid transport. Binds 2 molecules of cholate per subunit. The sequence is that of Fatty acid-binding protein, liver (FABP1) from Gallus gallus (Chicken).